The primary structure comprises 307 residues: Myeloid-associated differentiation marker-like protein 2 (307 aa).

2 consecutive MARVEL domains span residues 17 to 154 and 159 to 303; these read AVTS…ARPG and YMAT…RIRF. A run of 7 helical transmembrane segments spans residues 53–73, 90–110, 129–149, 163–183, 198–218, 232–252, and 278–298; these read FCMA…ACEF, AFAM…PLYF, LAAS…VALT, VSGL…GALV, VAVY…SVMG, IVYT…WPVF, and LVVA…LAYS.

It belongs to the MAL family.

It is found in the membrane. The chain is Myeloid-associated differentiation marker-like protein 2 (Myadml2) from Mus musculus (Mouse).